The chain runs to 306 residues: MTNKPAKRPVNGVLLLDKPEGLSSNTALQKARRLFHAEKAGHTGVLDPLATGLLPVCFGEAAKFAQYLLDADKAYTATLKLGEASSTGDAEGEIIAAARADISLAEFQTACQALTGNIRQVPPMFSALKHEGKPLYEYARKGIVIERKPRDITVYSIDIAEFDAPKAVISVRCSKGTYIRTLSEGIAKHIGTFAHLTALRRTETAGFTIAQSHTLEALANLNETERDGLLLPCDVLVSHFPQTVLNDYAVHMLQCGQRPRFEEDLPSDTPVRVYTENGRFVGLAEYQKEICRMKALRLMNTAASSA.

The active-site Nucleophile is the Asp-47.

It belongs to the pseudouridine synthase TruB family. Type 1 subfamily.

The catalysed reaction is uridine(55) in tRNA = pseudouridine(55) in tRNA. Its function is as follows. Responsible for synthesis of pseudouridine from uracil-55 in the psi GC loop of transfer RNAs. This is tRNA pseudouridine synthase B from Neisseria gonorrhoeae (strain ATCC 700825 / FA 1090).